We begin with the raw amino-acid sequence, 246 residues long: Large ribosomal subunit protein uL30-like 1 (246 aa).

Phosphoserine is present on S54.

This sequence belongs to the universal ribosomal protein uL30 family.

This Pongo abelii (Sumatran orangutan) protein is Large ribosomal subunit protein uL30-like 1 (RPL7L1).